Consider the following 129-residue polypeptide: Small ribosomal subunit protein uS11 (129 aa).

Belongs to the universal ribosomal protein uS11 family. As to quaternary structure, part of the 30S ribosomal subunit. Interacts with proteins S7 and S18. Binds to IF-3.

Functionally, located on the platform of the 30S subunit, it bridges several disparate RNA helices of the 16S rRNA. Forms part of the Shine-Dalgarno cleft in the 70S ribosome. The chain is Small ribosomal subunit protein uS11 from Vibrio atlanticus (strain LGP32) (Vibrio splendidus (strain Mel32)).